The following is a 321-amino-acid chain: uncharacterized protein (321 aa).

This is an uncharacterized protein from Aquifex aeolicus (strain VF5).